The sequence spans 373 residues: UDP-N-acetylenolpyruvoylglucosamine reductase (373 aa).

One can recognise an FAD-binding PCMH-type domain in the interval 30-203; that stretch reads LACTANSVVT…SRVGFRLHTD (174 aa). Arg180 is an active-site residue. Ser258 acts as the Proton donor in catalysis. Glu356 is a catalytic residue.

Belongs to the MurB family. FAD is required as a cofactor.

It is found in the cytoplasm. The enzyme catalyses UDP-N-acetyl-alpha-D-muramate + NADP(+) = UDP-N-acetyl-3-O-(1-carboxyvinyl)-alpha-D-glucosamine + NADPH + H(+). The protein operates within cell wall biogenesis; peptidoglycan biosynthesis. Functionally, cell wall formation. This chain is UDP-N-acetylenolpyruvoylglucosamine reductase, found in Psychrobacter arcticus (strain DSM 17307 / VKM B-2377 / 273-4).